The sequence spans 61 residues: Small ribosomal subunit protein uS14B (61 aa).

Zn(2+) is bound by residues cysteine 24, cysteine 27, cysteine 40, and cysteine 43.

The protein belongs to the universal ribosomal protein uS14 family. Zinc-binding uS14 subfamily. Part of the 30S ribosomal subunit. Contacts proteins S3 and S10. Zn(2+) is required as a cofactor.

Its function is as follows. Binds 16S rRNA, required for the assembly of 30S particles and may also be responsible for determining the conformation of the 16S rRNA at the A site. The chain is Small ribosomal subunit protein uS14B from Rhodococcus jostii (strain RHA1).